Consider the following 255-residue polypeptide: Indole-3-glycerol phosphate synthase (255 aa).

This sequence belongs to the TrpC family.

It catalyses the reaction 1-(2-carboxyphenylamino)-1-deoxy-D-ribulose 5-phosphate + H(+) = (1S,2R)-1-C-(indol-3-yl)glycerol 3-phosphate + CO2 + H2O. It participates in amino-acid biosynthesis; L-tryptophan biosynthesis; L-tryptophan from chorismate: step 4/5. This is Indole-3-glycerol phosphate synthase from Streptococcus pneumoniae (strain Hungary19A-6).